The chain runs to 150 residues: Auxin-binding protein 5 (150 aa).

Residues 1-41 form the signal peptide; the sequence is MVRRRPATGAAQRPQLAAVGRGLLLASVLAAAASSLPVAES. Zn(2+) is bound by residues His98, His100, and Glu104. Asn136 carries an N-linked (GlcNAc...) asparagine glycan. His147 serves as a coordination point for Zn(2+).

As to quaternary structure, homodimer.

Its subcellular location is the endoplasmic reticulum lumen. This is probably a receptor for the plant hormone auxin. The sequence is that of Auxin-binding protein 5 (ABP5) from Zea mays (Maize).